A 192-amino-acid chain; its full sequence is dTTP/UTP pyrophosphatase (192 aa).

The Proton acceptor role is filled by D75.

Belongs to the Maf family. YhdE subfamily. It depends on a divalent metal cation as a cofactor.

The protein localises to the cytoplasm. The enzyme catalyses dTTP + H2O = dTMP + diphosphate + H(+). The catalysed reaction is UTP + H2O = UMP + diphosphate + H(+). In terms of biological role, nucleoside triphosphate pyrophosphatase that hydrolyzes dTTP and UTP. May have a dual role in cell division arrest and in preventing the incorporation of modified nucleotides into cellular nucleic acids. The sequence is that of dTTP/UTP pyrophosphatase from Pelodictyon phaeoclathratiforme (strain DSM 5477 / BU-1).